The primary structure comprises 508 residues: UBX domain-containing protein 4 (508 aa).

The interval 1–200 (MLWFQGAIPA…PTEDLTVRVE (200 aa)) is interaction with UBQLN1. Over 1–413 (MLWFQGAIPA…VHSSSGDFWT (413 aa)) the chain is Cytoplasmic. Residues 117-199 (GEASLANGSQ…RPTEDLTVRV (83 aa)) are disordered. The span at 122–190 (ANGSQSEGSV…QEPSGCSNQR (69 aa)) shows a compositional bias: polar residues. One can recognise a UBX domain in the interval 315–393 (ERSTVARIQF…ELAPSASVVL (79 aa)). Residues 414–434 (LLGTVLYPFLAIWRLISNFLF) lie within the membrane without spanning it. At 435-508 (SNPPPAQTSV…TWNGNSTQQM (74 aa)) the chain is on the cytoplasmic side. The span at 450–459 (ETSNLASSSN) shows a compositional bias: polar residues. The segment at 450–508 (ETSNLASSSNSEKREPVRKRVLEKRGEDFKKEGKIYRLRTQDDGEDENNTWNGNSTQQM) is disordered. The segment covering 460–491 (SEKREPVRKRVLEKRGEDFKKEGKIYRLRTQD) has biased composition (basic and acidic residues). Phosphothreonine is present on T489. The segment covering 498-508 (NTWNGNSTQQM) has biased composition (polar residues).

As to quaternary structure, directly interacts with VCP. Interacts with UBQLN1. Forms a complex with VCP and UBQLN1.

It localises to the endoplasmic reticulum membrane. The protein localises to the nucleus envelope. Its function is as follows. Involved in endoplasmic reticulum-associated protein degradation (ERAD). Acts as a platform to recruit both UBQLN1 and VCP to the ER during ERAD. In Bos taurus (Bovine), this protein is UBX domain-containing protein 4 (UBXN4).